A 371-amino-acid chain; its full sequence is Histidinol-phosphate aminotransferase (371 aa).

An N6-(pyridoxal phosphate)lysine modification is found at K228.

This sequence belongs to the class-II pyridoxal-phosphate-dependent aminotransferase family. Histidinol-phosphate aminotransferase subfamily. Homodimer. Pyridoxal 5'-phosphate is required as a cofactor.

The enzyme catalyses L-histidinol phosphate + 2-oxoglutarate = 3-(imidazol-4-yl)-2-oxopropyl phosphate + L-glutamate. It functions in the pathway amino-acid biosynthesis; L-histidine biosynthesis; L-histidine from 5-phospho-alpha-D-ribose 1-diphosphate: step 7/9. This is Histidinol-phosphate aminotransferase from Thermosynechococcus vestitus (strain NIES-2133 / IAM M-273 / BP-1).